Consider the following 343-residue polypeptide: tRNA N6-adenosine threonylcarbamoyltransferase (343 aa).

Histidine 115 and histidine 119 together coordinate Fe cation. Residues 138–142 (LVSGA), aspartate 171, glycine 184, and asparagine 276 each bind substrate. Position 304 (aspartate 304) interacts with Fe cation.

Belongs to the KAE1 / TsaD family. The cofactor is Fe(2+).

It is found in the cytoplasm. It carries out the reaction L-threonylcarbamoyladenylate + adenosine(37) in tRNA = N(6)-L-threonylcarbamoyladenosine(37) in tRNA + AMP + H(+). In terms of biological role, required for the formation of a threonylcarbamoyl group on adenosine at position 37 (t(6)A37) in tRNAs that read codons beginning with adenine. Is involved in the transfer of the threonylcarbamoyl moiety of threonylcarbamoyl-AMP (TC-AMP) to the N6 group of A37, together with TsaE and TsaB. TsaD likely plays a direct catalytic role in this reaction. This is tRNA N6-adenosine threonylcarbamoyltransferase from Buchnera aphidicola subsp. Cinara cedri (strain Cc).